A 513-amino-acid polypeptide reads, in one-letter code: Maturase K (513 aa).

The protein belongs to the intron maturase 2 family. MatK subfamily.

The protein localises to the plastid. It localises to the chloroplast. Usually encoded in the trnK tRNA gene intron. Probably assists in splicing its own and other chloroplast group II introns. In Sporobolus michauxianus (Prairie cordgrass), this protein is Maturase K.